Consider the following 309-residue polypeptide: uncharacterized protein (309 aa).

A compositionally biased stretch (basic residues) spans M1–V11. Positions M1–T69 are disordered. S-adenosyl-L-methionine is bound by residues G261, I281, and L290.

The protein belongs to the class IV-like SAM-binding methyltransferase superfamily. RNA methyltransferase TrmH family.

This is an uncharacterized protein from Mycobacterium leprae (strain TN).